Reading from the N-terminus, the 90-residue chain is Evasin P1126 (90 aa).

A signal peptide spans 1–25 (MTSHSAVRIAIFAVIALHSIFECLS). Disulfide bonds link cysteine 46/cysteine 62, cysteine 50/cysteine 64, and cysteine 58/cysteine 75. Asparagine 55 carries an N-linked (GlcNAc...) asparagine glycan. An N-linked (GlcNAc...) asparagine glycan is attached at asparagine 77.

It is found in the secreted. Its function is as follows. Salivary chemokine-binding protein which binds to host chemokines CXCL1, CXCL2, CXCL3, CXCL4, CXCL5, CXCL6, CXCL7, CXCL10 and CXCL11. The polypeptide is Evasin P1126 (Amblyomma cajennense (Cayenne tick)).